Consider the following 210-residue polypeptide: Rho-related GTP-binding protein RhoD (210 aa).

Residue 24–31 (GDGGCGKT) coordinates GTP. The short motif at 46–54 (YTPTVFERY) is the Effector region element. GTP is bound by residues 71 to 75 (DTAGQ) and 129 to 132 (CKTD). Cysteine methyl ester is present on C207. C207 is lipidated: S-geranylgeranyl cysteine. The propeptide at 208 to 210 (VVT) is removed in mature form.

This sequence belongs to the small GTPase superfamily. Rho family. Interacts (in GTP-bound form) with DIAPH2 isoform 3, DAPK3, FILIP1 and WHAMM. Interacts with PAK5. Interacts (independent of GTP-loaded status) with ANKFY1. Heart, placenta, liver, skeletal muscle, and pancreas and, with weaker intensity, in several other tissues.

The protein resides in the cell membrane. It is found in the early endosome. Functionally, involved in endosome dynamics. May coordinate membrane transport with the function of the cytoskeleton. Involved in the internalization and trafficking of activated tyrosine kinase receptors such as PDGFRB. Participates in the reorganization of actin cytoskeleton; the function seems to involve WHAMM and includes regulation of filopodia formation and actin filament bundling. Can modulate the effect of DAPK3 in reorganization of actin cytoskeleton and focal adhesion dissolution. The chain is Rho-related GTP-binding protein RhoD from Homo sapiens (Human).